Here is a 661-residue protein sequence, read N- to C-terminus: MTEEAMRAMALSIRSLTIDAIERANSGHPGLPLGAAELAACLYGTILKHNPANPSWFNRDRFVLSAGHGSMLLYAALHLSGYDVSLEDIKNFRQVGSRCPGHPEYGCTPGVEATTGPLGQGISMAVGFALAEAMLAARFNTDEHAVVDHHTYALVGEGCLMEGVASEASSFAGTMRLGKLIVFYDENHISIDGSTDLTFSEDVAKRYEAYGWQVLRGSMYSYTDIMDLTACAKRDDRPSLIILRSIIGKGAPTVEGSARAHGAPLGEAGVREAKKALGLDPACSFFVAPELTAVLQKRKCECAHVEDSWNELFEAWSTQYPEKRADWDAAFVPGGVSTSQLARVVCPHFEKGSSLATRTASGKVLDALCSVLPNLVGGSADLRGPNAVAVSSLRPFSAEHRAGGYCYFGVREFAMAAIVNGMQLHGGLRAFGATFMVFSDYFRPALRLAALMRIPSVFVLTHDSIFVGEDGPTHQPVETLAALRAIPNVLVLRPADAEETFEAWKIALLHRSGPVCIVLSRQNVPVFEKSDSSWRSTVEESGAYVVREGGATPELTVLASGSEVDLALRAAQLSKRRVRVVSVLCKERFEAAGDEVQRRIQGGARVVVAEAGVYQGWGAWAKREKCLVLDRFGXSGPGTQVAQALEFTAEALVEIILDWLA.

Substrate is bound at residue His-28. Thiamine diphosphate is bound by residues His-68 and 116 to 118 (GPL). Residue Glu-157 coordinates Mg(2+). 2 residues coordinate thiamine diphosphate: Gly-158 and Asn-187. Mg(2+)-binding residues include Asn-187 and Ile-189. Substrate is bound by residues His-261 and Arg-358. Residue His-261 coordinates thiamine diphosphate. Glu-412 (proton donor) is an active-site residue. Phe-438 is a thiamine diphosphate binding site. Positions 462, 470, and 521 each coordinate substrate.

Belongs to the transketolase family. In terms of assembly, homodimer. Requires Mg(2+) as cofactor. Ca(2+) is required as a cofactor. The cofactor is Mn(2+). Co(2+) serves as cofactor. It depends on thiamine diphosphate as a cofactor.

The enzyme catalyses D-sedoheptulose 7-phosphate + D-glyceraldehyde 3-phosphate = aldehydo-D-ribose 5-phosphate + D-xylulose 5-phosphate. Functionally, catalyzes the transfer of a two-carbon ketol group from a ketose donor to an aldose acceptor, via a covalent intermediate with the cofactor thiamine pyrophosphate. The sequence is that of Transketolase (tkt) from Treponema pallidum (strain Nichols).